The following is a 291-amino-acid chain: Formamidopyrimidine-DNA glycosylase (291 aa).

Pro-2 serves as the catalytic Schiff-base intermediate with DNA. Residue Glu-3 is the Proton donor of the active site. The Proton donor; for beta-elimination activity role is filled by Lys-60. His-97, Arg-116, and Arg-161 together coordinate DNA. An FPG-type zinc finger spans residues 246–280 (WVYNRAGEPCRVCGMPIQRIRLAGRSSHFCSECQT). Catalysis depends on Arg-270, which acts as the Proton donor; for delta-elimination activity.

The protein belongs to the FPG family. Monomer. It depends on Zn(2+) as a cofactor.

It carries out the reaction Hydrolysis of DNA containing ring-opened 7-methylguanine residues, releasing 2,6-diamino-4-hydroxy-5-(N-methyl)formamidopyrimidine.. The catalysed reaction is 2'-deoxyribonucleotide-(2'-deoxyribose 5'-phosphate)-2'-deoxyribonucleotide-DNA = a 3'-end 2'-deoxyribonucleotide-(2,3-dehydro-2,3-deoxyribose 5'-phosphate)-DNA + a 5'-end 5'-phospho-2'-deoxyribonucleoside-DNA + H(+). Functionally, involved in base excision repair of DNA damaged by oxidation or by mutagenic agents. Acts as a DNA glycosylase that recognizes and removes damaged bases. Has a preference for oxidized purines, such as 7,8-dihydro-8-oxoguanine (8-oxoG). Has AP (apurinic/apyrimidinic) lyase activity and introduces nicks in the DNA strand. Cleaves the DNA backbone by beta-delta elimination to generate a single-strand break at the site of the removed base with both 3'- and 5'-phosphates. The protein is Formamidopyrimidine-DNA glycosylase of Nostoc punctiforme (strain ATCC 29133 / PCC 73102).